The following is a 574-amino-acid chain: Putative diflavin flavoprotein A 3 (574 aa).

The interval Gln43–His236 is zinc metallo-hydrolase. Positions 92, 94, 96, 159, 178, and 236 each coordinate Fe cation. Residues Ile265 to Arg409 form the Flavodoxin-like domain. The tract at residues Ser410–Tyr574 is flavodoxin-reductase-like.

This sequence in the N-terminal section; belongs to the zinc metallo-hydrolase group 3 family. The protein in the C-terminal section; belongs to the flavodoxin reductase family. It depends on Fe cation as a cofactor.

In terms of biological role, mediates electron transfer from NADH to oxygen, reducing it to water. This modular protein has 3 redox cofactors, in other organisms the same activity requires 2 or 3 proteins. The protein is Putative diflavin flavoprotein A 3 (dfa3) of Nostoc sp. (strain PCC 7120 / SAG 25.82 / UTEX 2576).